A 386-amino-acid chain; its full sequence is Myosin light chain kinase family member 4 (386 aa).

Ser100 carries the phosphoserine modification. In terms of domain architecture, Protein kinase spans 107-361; that stretch reads VSKSEILGGG…ASEALKHPWL (255 aa). ATP is bound by residues 113–121 and Lys136; that span reads LGGGRFGQV. The active-site Proton acceptor is the Asp227.

This sequence belongs to the protein kinase superfamily. CAMK Ser/Thr protein kinase family.

It carries out the reaction L-seryl-[protein] + ATP = O-phospho-L-seryl-[protein] + ADP + H(+). The catalysed reaction is L-threonyl-[protein] + ATP = O-phospho-L-threonyl-[protein] + ADP + H(+). This chain is Myosin light chain kinase family member 4 (Mylk4), found in Mus musculus (Mouse).